A 112-amino-acid polypeptide reads, in one-letter code: Ribosome-binding factor A (112 aa).

The protein belongs to the RbfA family. As to quaternary structure, monomer. Binds 30S ribosomal subunits, but not 50S ribosomal subunits or 70S ribosomes.

It localises to the cytoplasm. Functionally, one of several proteins that assist in the late maturation steps of the functional core of the 30S ribosomal subunit. Associates with free 30S ribosomal subunits (but not with 30S subunits that are part of 70S ribosomes or polysomes). Required for efficient processing of 16S rRNA. May interact with the 5'-terminal helix region of 16S rRNA. The protein is Ribosome-binding factor A of Mycoplasmopsis pulmonis (strain UAB CTIP) (Mycoplasma pulmonis).